The chain runs to 218 residues: Ras-related protein Rab-4A (218 aa).

Residues G23, T24, G25, K26, S27, and C28 each coordinate GDP. 9 residues coordinate GTP: G23, T24, G25, K26, S27, C28, S42, H44, and T45. S27 lines the Mg(2+) pocket. A Switch 1 motif is present at residues 44-49 (HTIGVE). The Mg(2+) site is built by T45 and D68. A Switch 2 motif is present at residues 70-79 (AGQERFRSVT). G71 provides a ligand contact to GTP. Q72 is subject to 5-glutamyl serotonin. GDP is bound by residues N126, K127, D129, A157, and L158. Positions 126, 127, 129, 157, and 158 each coordinate GTP. The residue at position 190 (S190) is a Phosphoserine. The residue at position 204 (S204) is a Phosphoserine; by CDK1. 2 S-geranylgeranyl cysteine lipidation sites follow: C216 and C218. Position 218 is a cysteine methyl ester (C218).

It belongs to the small GTPase superfamily. Rab family. Interacts with SGSM1, SGSM2 and SGSM3. Interacts with RAB11FIP1, RABEP1, ZFYVE20 and RUFY1. Interacts (membrane-bound form) with NDRG1; the interaction involves NDRG1 in vesicular recycling of E-cadherin. Interacts (in GTP-bound form) with GRIPAP1 (via N-terminus). Interacts with RABEP1 and RBSN. Does not interact with HPS4. Interacts with RABEP2; this interaction may mediate VEGFR2 cell surface expression. Mg(2+) serves as cofactor. Phosphorylated by CDK1 kinase during mitosis. Post-translationally, serotonylation of Gln-72 by TGM2 during activation and aggregation of platelets leads to constitutive activation of GTPase activity.

It localises to the membrane. It is found in the cytoplasm. The protein localises to the early endosome membrane. Its subcellular location is the recycling endosome membrane. The catalysed reaction is GTP + H2O = GDP + phosphate + H(+). With respect to regulation, regulated by guanine nucleotide exchange factors (GEFs) which promote the exchange of bound GDP for free GTP. Regulated by GTPase activating proteins (GAPs) which increase the GTP hydrolysis activity. Inhibited by GDP dissociation inhibitors (GDIs). Its function is as follows. The small GTPases Rab are key regulators of intracellular membrane trafficking, from the formation of transport vesicles to their fusion with membranes. Rabs cycle between an inactive GDP-bound form and an active GTP-bound form that is able to recruit to membranes different sets of downstream effectors directly responsible for vesicle formation, movement, tethering and fusion. RAB4A is involved in protein transport. Also plays a role in vesicular traffic. Mediates VEGFR2 endosomal trafficking to enhance VEGFR2 signaling. Acts as a regulator of platelet alpha-granule release during activation and aggregation of platelets. The chain is Ras-related protein Rab-4A from Homo sapiens (Human).